Here is a 473-residue protein sequence, read N- to C-terminus: Serine/threonine-protein phosphatase 2A activator 1 (473 aa).

Positions 360 to 473 are disordered; it reads NAVPPPTSAH…HVPTKAPWAK (114 aa). Residues 368–378 show a composition bias toward polar residues; sequence AHMSTTQSQSR. Low complexity predominate over residues 395–416; sequence APWATATQAAPPAGAGTAAPWA.

The protein belongs to the PTPA-type PPIase family.

It localises to the cytoplasm. Its subcellular location is the nucleus. It carries out the reaction [protein]-peptidylproline (omega=180) = [protein]-peptidylproline (omega=0). Its function is as follows. PPIases accelerate the folding of proteins. It catalyzes the cis-trans isomerization of proline imidic peptide bonds in oligopeptides. Acts as a regulatory subunit for PP2A-like phosphatases modulating their activity or substrate specificity, probably by inducing a conformational change in the catalytic subunit, a direct target of the PPIase. Can reactivate inactive phosphatase PP2A-phosphatase methylesterase complexes (PP2Ai) in presence of ATP and Mg(2+) by dissociating the inactive form from the complex. The polypeptide is Serine/threonine-protein phosphatase 2A activator 1 (rrd1) (Aspergillus fumigatus (strain ATCC MYA-4609 / CBS 101355 / FGSC A1100 / Af293) (Neosartorya fumigata)).